The following is a 360-amino-acid chain: Protein pelota homolog (360 aa).

The protein belongs to the eukaryotic release factor 1 family. Pelota subfamily. Monomer. It depends on a divalent metal cation as a cofactor.

It localises to the cytoplasm. Its function is as follows. May function in recognizing stalled ribosomes, interact with stem-loop structures in stalled mRNA molecules, and effect endonucleolytic cleavage of the mRNA. May play a role in the release non-functional ribosomes and degradation of damaged mRNAs. Has endoribonuclease activity. The protein is Protein pelota homolog of Hyperthermus butylicus (strain DSM 5456 / JCM 9403 / PLM1-5).